Here is a 115-residue protein sequence, read N- to C-terminus: Ribonuclease P protein component (115 aa).

Belongs to the RnpA family. In terms of assembly, consists of a catalytic RNA component (M1 or rnpB) and a protein subunit.

It catalyses the reaction Endonucleolytic cleavage of RNA, removing 5'-extranucleotides from tRNA precursor.. RNaseP catalyzes the removal of the 5'-leader sequence from pre-tRNA to produce the mature 5'-terminus. It can also cleave other RNA substrates such as 4.5S RNA. The protein component plays an auxiliary but essential role in vivo by binding to the 5'-leader sequence and broadening the substrate specificity of the ribozyme. The chain is Ribonuclease P protein component from Baumannia cicadellinicola subsp. Homalodisca coagulata.